A 346-amino-acid chain; its full sequence is MPKTPLLGITEGDPAGIGPEITVQAIHNMADDRSFIPIVYGDPAIISRACSVTGLSETVRRVTSEEHIEPESNVINVVDTGTVPHADSIEWGSVQELAGRAAIASIEAATDAALSGKTDGVVTSPINKEAIWKTGSEFLGHTEMLGSLCGTPDTDTMFVVSGLKIFFATRHMSLREAVDSIRRDLIDHEIHKALRALKVFGCNSPKLAVAALNPHAGEGGHFGTEEIEVLRPAVKSACAEGHNVVGPVPADSVFHKGVIREYDGVLSLYHDQGHIASKTLDFDGTVSVTAGLPILRTSVDHGTAFDIAGQGAASPMTMQSALHVASDFARFVPVIREEYLPSTGRN.

Substrate-binding residues include H141 and T142. The a divalent metal cation site is built by H171, H215, and H270. The substrate site is built by K278 and R296.

This sequence belongs to the PdxA family. PdxA2 subfamily. As to quaternary structure, homodimer. A divalent metal cation is required as a cofactor.

It carries out the reaction 4-O-phospho-D-threonate + NAD(+) = dihydroxyacetone phosphate + CO2 + NADH. In terms of biological role, catalyzes the NAD-dependent oxidation and subsequent decarboxylation of D-threonate 4-phosphate to produce dihydroxyacetone phosphate (DHAP). In Cutibacterium acnes (strain DSM 16379 / KPA171202) (Propionibacterium acnes), this protein is Putative D-threonate 4-phosphate dehydrogenase.